Consider the following 191-residue polypeptide: uncharacterized protein (191 aa).

This is an uncharacterized protein from Schizosaccharomyces pombe (strain 972 / ATCC 24843) (Fission yeast).